A 174-amino-acid polypeptide reads, in one-letter code: Chromophore lyase CpcS/CpeS 1 (174 aa).

Belongs to the CpcS/CpeS biliprotein lyase family.

Its function is as follows. Covalently attaches a chromophore to Cys residue(s) of phycobiliproteins. This chain is Chromophore lyase CpcS/CpeS 1, found in Trichodesmium erythraeum (strain IMS101).